Reading from the N-terminus, the 32-residue chain is Allergen Asp fl 1 (32 aa).

The protein is Allergen Asp fl 1 of Aspergillus flavus.